Here is a 249-residue protein sequence, read N- to C-terminus: Coproheme decarboxylase (249 aa).

Residues Arg-131, 145–149, His-172, Gln-185, and Ser-223 each bind Fe-coproporphyrin III; that span reads YPMNK. The active site involves Tyr-145.

The protein belongs to the ChdC family. Type 1 subfamily. Fe-coproporphyrin III serves as cofactor.

It catalyses the reaction Fe-coproporphyrin III + 2 H2O2 + 2 H(+) = heme b + 2 CO2 + 4 H2O. The catalysed reaction is Fe-coproporphyrin III + H2O2 + H(+) = harderoheme III + CO2 + 2 H2O. The enzyme catalyses harderoheme III + H2O2 + H(+) = heme b + CO2 + 2 H2O. It functions in the pathway porphyrin-containing compound metabolism; protoheme biosynthesis. Involved in coproporphyrin-dependent heme b biosynthesis. Catalyzes the decarboxylation of Fe-coproporphyrin III (coproheme) to heme b (protoheme IX), the last step of the pathway. The reaction occurs in a stepwise manner with a three-propionate intermediate. The protein is Coproheme decarboxylase of Thermus thermophilus (strain ATCC BAA-163 / DSM 7039 / HB27).